The following is a 511-amino-acid chain: MPPSCTNSTQENNGSRVCLPLSKMPISVAHGIIRSVVLLVILGVAFLGNVVLGYVLHRKPNLLQVTNRFIFNLLVTDLLQVALVAPWVVSTAIPFFWPLNIHFCTALVSLTHLFAFASVNTIVVVSVDRYLTIIHPLSYPSKMTNRRSYILLYGTWIAAFLQSTPPLYGWGHATFDDRNAFCSMIWGASPAYTVVSVVSFLVIPLGVMIACYSVVFGAARRQQALLYKAKSHRLEVRVEDSVVHENEEGAKKRDEFQDKNEFQGQDGGGQAEAKGSSSMEESPMVAEGSSQKTGKGSLDFSAGIMEGKDSDEVSNGSMEGLEVITEFQASSAKADTGRIDANQCNIDVGEDDVEFGMDEIHFNDDVEAMRIPESSPPSRRNSTSDPPLPPCYECKAARVIFVIISTYVLSLGPYCFLAVLAVWVDIDTRVPQWVITIIIWLFFLQCCIHPYVYGYMHKSIKKEIQEVLKKLICKKSPPVEDSHPDLHETEAGTEGGIEGKAVPSHDSATSP.

Over Met1 to Ser35 the chain is Extracellular. Asn7 and Asn13 each carry an N-linked (GlcNAc...) asparagine glycan. Residues Val36–Leu56 traverse the membrane as a helical segment. Residues His57–Asn67 are Cytoplasmic-facing. The chain crosses the membrane as a helical span at residues Arg68 to Ser90. Over Thr91–Ala106 the chain is Extracellular. A disulfide bond links Cys104 and Cys182. The chain crosses the membrane as a helical span at residues Leu107–Val127. Topologically, residues Asp128–Tyr149 are cytoplasmic. The helical transmembrane segment at Ile150–Trp170 threads the bilayer. The Extracellular segment spans residues Gly171 to Ser196. The helical transmembrane segment at Val197 to Gly217 threads the bilayer. Residues Ala218–Arg398 lie on the Cytoplasmic side of the membrane. The span at Asp240–Glu261 shows a compositional bias: basic and acidic residues. Disordered stretches follow at residues Asp240 to Asn315 and Glu367 to Pro386. Over residues Pro376–Asp385 the composition is skewed to polar residues. A helical transmembrane segment spans residues Val399–Val419. Topologically, residues Leu420–Gln432 are extracellular. Residues Trp433–Tyr453 traverse the membrane as a helical segment. Residues Gly454–Pro511 are Cytoplasmic-facing. A disordered region spans residues Ser476–Pro511. Positions Pro477–Glu490 are enriched in basic and acidic residues.

This sequence belongs to the G-protein coupled receptor 1 family. As to expression, expressed in the brain in hypothalamus.

The protein localises to the cell membrane. In terms of biological role, orphan receptor. In Mus musculus (Mouse), this protein is Probable G-protein coupled receptor 101 (Gpr101).